We begin with the raw amino-acid sequence, 450 residues long: Tubulin alpha chain, testis-specific (450 aa).

The MREC motif signature appears at 1 to 4 (MREC). Residue Gln11 coordinates GTP. Lys40 carries the post-translational modification N6-acetyllysine. GTP contacts are provided by Glu71, Ser140, Gly144, Thr145, Thr179, Asn206, and Asn228. Glu71 lines the Mg(2+) pocket. The active site involves Glu254.

Belongs to the tubulin family. Dimer of alpha and beta chains. A typical microtubule is a hollow water-filled tube with an outer diameter of 25 nm and an inner diameter of 15 nM. Alpha-beta heterodimers associate head-to-tail to form protofilaments running lengthwise along the microtubule wall with the beta-tubulin subunit facing the microtubule plus end conferring a structural polarity. Microtubules usually have 13 protofilaments but different protofilament numbers can be found in some organisms and specialized cells. Mg(2+) is required as a cofactor. In terms of processing, some glutamate residues at the C-terminus are polyglycylated, resulting in polyglycine chains on the gamma-carboxyl group. Glycylation is mainly limited to tubulin incorporated into axonemes (cilia and flagella) whereas glutamylation is prevalent in neuronal cells, centrioles, axonemes, and the mitotic spindle. Both modifications can coexist on the same protein on adjacent residues, and lowering polyglycylation levels increases polyglutamylation, and reciprocally. The precise function of polyglycylation is still unclear. Some glutamate residues at the C-terminus are polyglutamylated, resulting in polyglutamate chains on the gamma-carboxyl group. Polyglutamylation plays a key role in microtubule severing by spastin (SPAST). SPAST preferentially recognizes and acts on microtubules decorated with short polyglutamate tails: severing activity by SPAST increases as the number of glutamates per tubulin rises from one to eight, but decreases beyond this glutamylation threshold. Post-translationally, acetylation of alpha chains at Lys-40 is located inside the microtubule lumen. This modification has been correlated with increased microtubule stability, intracellular transport and ciliary assembly. In terms of processing, undergoes a tyrosination/detyrosination cycle, the cyclic removal and re-addition of a C-terminal tyrosine residue by the enzymes tubulin tyrosine carboxypeptidase (MATCAP, VASH1 or VASH2) and tubulin tyrosine ligase (TTL), respectively. Tyrosination promotes microtubule interaction with CAP-Gly microtubule plus-end tracking proteins. Tyrosinated tubulins regulate the initiation of dynein-driven motility. Post-translationally, detyrosination is involved in metaphase plate congression by guiding chromosomes during mitosis. Detyrosination increases microtubules-dependent mechanotransduction in dystrophic cardiac and skeletal muscle. In cardiomyocytes, detyrosinated microtubules are required to resist to contractile compression during contraction. In terms of tissue distribution, testis specific.

It localises to the cytoplasm. The protein resides in the cytoskeleton. The enzyme catalyses GTP + H2O = GDP + phosphate + H(+). Tubulin is the major constituent of microtubules, a cylinder consisting of laterally associated linear protofilaments composed of alpha- and beta-tubulin heterodimers. Microtubules grow by the addition of GTP-tubulin dimers to the microtubule end, where a stabilizing cap forms. Below the cap, tubulin dimers are in GDP-bound state, owing to GTPase activity of alpha-tubulin. This is Tubulin alpha chain, testis-specific from Oncorhynchus mykiss (Rainbow trout).